A 351-amino-acid chain; its full sequence is Dihydroorotate dehydrogenase (quinone) (351 aa).

Residues 61–65 (AGLDK) and threonine 85 contribute to the FMN site. Residue lysine 65 coordinates substrate. 110–114 (NRMGF) provides a ligand contact to substrate. Residues asparagine 139 and asparagine 172 each contribute to the FMN site. Residue asparagine 172 participates in substrate binding. The active-site Nucleophile is the serine 175. Asparagine 177 contacts substrate. FMN is bound by residues lysine 217 and threonine 245. 246-247 (NT) provides a ligand contact to substrate. FMN is bound by residues glycine 268, glycine 297, and 318-319 (YS).

It belongs to the dihydroorotate dehydrogenase family. Type 2 subfamily. In terms of assembly, monomer. It depends on FMN as a cofactor.

Its subcellular location is the cell membrane. It carries out the reaction (S)-dihydroorotate + a quinone = orotate + a quinol. Its pathway is pyrimidine metabolism; UMP biosynthesis via de novo pathway; orotate from (S)-dihydroorotate (quinone route): step 1/1. Its function is as follows. Catalyzes the conversion of dihydroorotate to orotate with quinone as electron acceptor. The chain is Dihydroorotate dehydrogenase (quinone) from Xanthomonas campestris pv. campestris (strain 8004).